Reading from the N-terminus, the 84-residue chain is uncharacterized protein (84 aa).

2 stretches are compositionally biased toward basic residues: residues 1–15 (MPPHGHHHHGHHGHH) and 67–84 (HHGHHGHHGHHGHHGHFF). 2 disordered regions span residues 1–22 (MPPHGHHHHGHHGHHEHVTYTT) and 64–84 (TSHHHGHHGHHGHHGHHGHFF).

This is an uncharacterized protein from Dictyostelium discoideum (Social amoeba).